Consider the following 233-residue polypeptide: Adenylyl cyclase-associated protein 1 (233 aa).

Tyr14 bears the Phosphotyrosine mark. Ser17 carries the post-translational modification Phosphoserine. Disordered stretches follow at residues Val43–Leu71 and Asp91–Thr129. The segment covering Leu53–Ser64 has biased composition (low complexity). At Lys101 the chain carries N6-methyllysine. Phosphoserine occurs at positions 104, 115, 122, and 124. Residue Lys151 forms a Glycyl lysine isopeptide (Lys-Gly) (interchain with G-Cter in SUMO1) linkage. The C-CAP/cofactor C-like domain occupies Val173–Val221.

The protein belongs to the CAP family. As to quaternary structure, homodimer. Binds actin monomers.

It is found in the cell membrane. Functionally, directly regulates filament dynamics and has been implicated in a number of complex developmental and morphological processes, including mRNA localization and the establishment of cell polarity. The sequence is that of Adenylyl cyclase-associated protein 1 (CAP1) from Sus scrofa (Pig).